Here is a 172-residue protein sequence, read N- to C-terminus: R-phycocyanin-1 beta chain (172 aa).

Asn72 bears the N4-methylasparagine mark. Position 82 (Cys82) interacts with (2R,3E)-phycocyanobilin. Position 153 (Cys153) interacts with (2R,3E)-phycoerythrobilin.

The protein belongs to the phycobiliprotein family. Heterodimer of an alpha and a beta chain. Dimers further assemble into trimers and the trimers into hexamers. The basic functional unit of phycobiliproteins is a ring-shaped hexamer formed from two back-to-back trimers contacting via the alpha chain subunits. The trimers are composed of alpha/beta subunit heterodimers arranged around a three-fold axis of symmetry. The phycoerythrins also contain a gamma subunit which is located in the center of the hexamer. Contains two covalently linked bilin chromophores.

It localises to the plastid. The protein resides in the chloroplast thylakoid membrane. In terms of biological role, light-harvesting photosynthetic bile pigment-protein from the phycobiliprotein complex (phycobilisome, PBS). Phycocyanin is the major phycobiliprotein in the PBS rod. The polypeptide is R-phycocyanin-1 beta chain (rpcB) (Porphyridium purpureum (Red alga)).